We begin with the raw amino-acid sequence, 84 residues long: Large ribosomal subunit protein bL27 (84 aa).

The segment at 1–21 (MAHKKGGGSTKNGRDSNPKYL) is disordered.

The protein belongs to the bacterial ribosomal protein bL27 family.

The protein is Large ribosomal subunit protein bL27 of Chlorobium luteolum (strain DSM 273 / BCRC 81028 / 2530) (Pelodictyon luteolum).